A 161-amino-acid chain; its full sequence is Allophycocyanin alpha chain 2 (161 aa).

The residue at position 71 (asparagine 71) is an N4-methylasparagine. Residue cysteine 81 coordinates (2R,3E)-phycocyanobilin.

This sequence belongs to the phycobiliprotein family. Component of the phycobilisome. Heterodimer of an alpha and a beta chain. In terms of processing, contains one covalently linked bilin chromophore.

It localises to the cellular thylakoid membrane. In terms of biological role, light-harvesting photosynthetic bile pigment-protein from the phycobiliprotein complex. Allophycocyanin has a maximum absorption at approximately 650 nanometers. The polypeptide is Allophycocyanin alpha chain 2 (apcA2) (Microchaete diplosiphon (Fremyella diplosiphon)).